Consider the following 737-residue polypeptide: Prospero homeobox protein 1 (737 aa).

An interaction with RORG region spans residues 1–28 (MPDHDSTALLSRQTKRRRVDIGVKRTVG). Polar residues predominate over residues 103–135 (KNGGTEPSFQASGLSSTGSEVHQEDICSNSSRD). The tract at residues 103 to 149 (KNGGTEPSFQASGLSSTGSEVHQEDICSNSSRDSPPECLSPFGRPTM) is disordered. Ser177, Ser179, and Ser199 each carry phosphoserine. Residues 178-242 (HSPSVALRGN…REERRQLKQQ (65 aa)) form a disordered region. Residues 213-223 (LPQQQQQSFQQ) are compositionally biased toward low complexity. Positions 227-242 (ARKEQKREERRQLKQQ) are enriched in basic and acidic residues. 2 positions are modified to phosphoserine: Ser291 and Ser295. The span at 320–337 (MAENKPKREGNNKERDHG) shows a compositional bias: basic and acidic residues. Disordered stretches follow at residues 320-344 (MAENKPKREGNNKERDHGPNSLQPE) and 445-476 (KNSSDQSASGPAAGGHHQPLHQSPLSATTGFT). Lys324 is covalently cross-linked (Glycyl lysine isopeptide (Lys-Gly) (interchain with G-Cter in SUMO2)). Over residues 464–476 (LHQSPLSATTGFT) the composition is skewed to polar residues. Phosphoserine occurs at positions 511, 514, and 557. A Prospero-type homeo domain is found at 577–635 (QEGLSPNHLKKAKLMFFYTRYPSSNMLKTYFSDVKFNRCITSQLIKWFSNFREFYYIQM). The segment at 577–735 (QEGLSPNHLK…KSPNCLQELL (159 aa)) is homeo-Prospero. A Prospero domain is found at 636-735 (EKYARQAIND…KSPNCLQELL (100 aa)). Residues 723–729 (EIFKSPN) form an essential for nuclear localization, interaction with RORG, repression of RORG transcriptional activator activity region.

Belongs to the Prospero homeodomain family. In terms of assembly, interacts with RORA and RORG (via AF-2 motif). Most actively expressed in the developing lens. Detected also in embryonic brain, lung, liver and kidney. In adult, it is more abundant in heart and liver than in brain, skeletal muscle, kidney and pancreas.

Its subcellular location is the nucleus. Its function is as follows. Transcription factor involved in developmental processes such as cell fate determination, gene transcriptional regulation and progenitor cell regulation in a number of organs. Plays a critical role in embryonic development and functions as a key regulatory protein in neurogenesis and the development of the heart, eye lens, liver, pancreas and the lymphatic system. Involved in the regulation of the circadian rhythm. Represses: transcription of the retinoid-related orphan receptor RORG, transcriptional activator activity of RORA and RORG and the expression of RORA/G-target genes including core clock components: BMAL1, NPAS2 and CRY1 and metabolic genes: AVPR1A and ELOVL3. This Homo sapiens (Human) protein is Prospero homeobox protein 1 (PROX1).